The following is a 327-amino-acid chain: Phenylalanine--tRNA ligase alpha subunit (327 aa).

Glu252 is a Mg(2+) binding site.

It belongs to the class-II aminoacyl-tRNA synthetase family. Phe-tRNA synthetase alpha subunit type 1 subfamily. Tetramer of two alpha and two beta subunits. Requires Mg(2+) as cofactor.

The protein localises to the cytoplasm. The catalysed reaction is tRNA(Phe) + L-phenylalanine + ATP = L-phenylalanyl-tRNA(Phe) + AMP + diphosphate + H(+). The polypeptide is Phenylalanine--tRNA ligase alpha subunit (Tolumonas auensis (strain DSM 9187 / NBRC 110442 / TA 4)).